A 675-amino-acid chain; its full sequence is Alpha-1,4-glucan:maltose-1-phosphate maltosyltransferase 1 (675 aa).

The alpha-maltose 1-phosphate site is built by Lys-264, Gln-324, and Asp-359. The Nucleophile role is filled by Asp-394. Residue Asn-395 participates in alpha-maltose 1-phosphate binding. The active-site Proton donor is Glu-423. An alpha-maltose 1-phosphate-binding site is contributed by 534-535; the sequence is KY.

It belongs to the glycosyl hydrolase 13 family. GlgE subfamily. In terms of assembly, homodimer.

The catalysed reaction is alpha-maltose 1-phosphate + [(1-&gt;4)-alpha-D-glucosyl](n) = [(1-&gt;4)-alpha-D-glucosyl](n+2) + phosphate. Is competitively inhibited by alpha-, beta- and gamma-cyclodextrins (cyclic maltooligosaccharides), unlike GlgE from M.tuberculosis. In terms of biological role, maltosyltransferase that uses maltose 1-phosphate (M1P) as the sugar donor to elongate linear or branched alpha-(1-&gt;4)-glucans. Maltooligosaccharides with a degree of polymerization (DP) superior or equal to 4 are efficient acceptors, with DP6 being optimal in the GlgE-catalyzed polymerization with M1P. Is specific for the alpha-anomer of M1P as substrate, since the beta-anomer of M1P gives no activity. Alpha-D-glucose 1-phosphate cannot serve as a donor substrate, but alpha-maltosyl fluoride is an efficient donor in vitro. Exhibits an alpha-retaining catalytic mechanism, with evidence that maltooligosaccharide acceptors are extended at their non-reducing ends. Is also able to catalyze the reverse reaction in vitro, releasing M1P from glycogen or maltoheptaose in the presence of inorganic phosphate. Also catalyzes disproportionation reactions through maltosyl transfer between maltooligosaccharides. Is probably involved in a branched alpha-glucan biosynthetic pathway from trehalose, together with TreS, Mak and GlgB. The chain is Alpha-1,4-glucan:maltose-1-phosphate maltosyltransferase 1 (glgE1) from Streptomyces coelicolor (strain ATCC BAA-471 / A3(2) / M145).